Reading from the N-terminus, the 388-residue chain is Succinate--CoA ligase [ADP-forming] subunit beta (388 aa).

An ATP-grasp domain is found at 9–244 (KQLFAEYGLP…PSQDDPREAH (236 aa)). ATP is bound by residues Lys-46, 53–55 (GRG), Glu-99, Thr-102, and Glu-107. Mg(2+) is bound by residues Asn-199 and Asp-213. Substrate-binding positions include Asn-264 and 321-323 (GIV).

Belongs to the succinate/malate CoA ligase beta subunit family. In terms of assembly, heterotetramer of two alpha and two beta subunits. Requires Mg(2+) as cofactor.

It carries out the reaction succinate + ATP + CoA = succinyl-CoA + ADP + phosphate. The catalysed reaction is GTP + succinate + CoA = succinyl-CoA + GDP + phosphate. The protein operates within carbohydrate metabolism; tricarboxylic acid cycle; succinate from succinyl-CoA (ligase route): step 1/1. Succinyl-CoA synthetase functions in the citric acid cycle (TCA), coupling the hydrolysis of succinyl-CoA to the synthesis of either ATP or GTP and thus represents the only step of substrate-level phosphorylation in the TCA. The beta subunit provides nucleotide specificity of the enzyme and binds the substrate succinate, while the binding sites for coenzyme A and phosphate are found in the alpha subunit. This chain is Succinate--CoA ligase [ADP-forming] subunit beta, found in Pseudomonas fluorescens (strain SBW25).